We begin with the raw amino-acid sequence, 66 residues long: Small ribosomal subunit protein eS27 (66 aa).

Zn(2+) contacts are provided by cysteine 21, cysteine 24, cysteine 40, and cysteine 43. The segment at 21–43 (CPNCGNEQTVFSHATFPVRCLSC) adopts a C4-type zinc-finger fold.

This sequence belongs to the eukaryotic ribosomal protein eS27 family. Part of the 30S ribosomal subunit. Zn(2+) is required as a cofactor.

The sequence is that of Small ribosomal subunit protein eS27 from Sulfurisphaera tokodaii (strain DSM 16993 / JCM 10545 / NBRC 100140 / 7) (Sulfolobus tokodaii).